Here is a 180-residue protein sequence, read N- to C-terminus: Endoribonuclease YbeY (180 aa).

Zn(2+) is bound by residues His-149, His-153, and His-159.

It belongs to the endoribonuclease YbeY family. The cofactor is Zn(2+).

The protein localises to the cytoplasm. Its function is as follows. Single strand-specific metallo-endoribonuclease involved in late-stage 70S ribosome quality control and in maturation of the 3' terminus of the 16S rRNA. The protein is Endoribonuclease YbeY of Prochlorococcus marinus (strain MIT 9515).